The chain runs to 391 residues: S-adenosylmethionine synthase (391 aa).

H14 serves as a coordination point for ATP. Position 16 (D16) interacts with Mg(2+). E42 lines the K(+) pocket. E55 and Q98 together coordinate L-methionine. A flexible loop region spans residues 98–108; sequence QSVDIAIGVDE. ATP contacts are provided by residues 172–174, 238–239, D247, 253–254, A270, and K274; these read DGK, RF, and RK. D247 is a binding site for L-methionine. L-methionine is bound at residue K278.

Belongs to the AdoMet synthase family. As to quaternary structure, homotetramer; dimer of dimers. It depends on Mg(2+) as a cofactor. The cofactor is K(+).

Its subcellular location is the cytoplasm. The enzyme catalyses L-methionine + ATP + H2O = S-adenosyl-L-methionine + phosphate + diphosphate. It functions in the pathway amino-acid biosynthesis; S-adenosyl-L-methionine biosynthesis; S-adenosyl-L-methionine from L-methionine: step 1/1. Functionally, catalyzes the formation of S-adenosylmethionine (AdoMet) from methionine and ATP. The overall synthetic reaction is composed of two sequential steps, AdoMet formation and the subsequent tripolyphosphate hydrolysis which occurs prior to release of AdoMet from the enzyme. The polypeptide is S-adenosylmethionine synthase (Clostridium botulinum (strain Okra / Type B1)).